The following is a 302-amino-acid chain: 4-hydroxy-tetrahydrodipicolinate synthase (302 aa).

Thr55 is a binding site for pyruvate. Tyr144 functions as the Proton donor/acceptor in the catalytic mechanism. The active-site Schiff-base intermediate with substrate is the Lys172. Val214 provides a ligand contact to pyruvate.

This sequence belongs to the DapA family. Homotetramer; dimer of dimers.

The protein localises to the cytoplasm. It catalyses the reaction L-aspartate 4-semialdehyde + pyruvate = (2S,4S)-4-hydroxy-2,3,4,5-tetrahydrodipicolinate + H2O + H(+). Its pathway is amino-acid biosynthesis; L-lysine biosynthesis via DAP pathway; (S)-tetrahydrodipicolinate from L-aspartate: step 3/4. Functionally, catalyzes the condensation of (S)-aspartate-beta-semialdehyde [(S)-ASA] and pyruvate to 4-hydroxy-tetrahydrodipicolinate (HTPA). This chain is 4-hydroxy-tetrahydrodipicolinate synthase, found in Synechococcus sp. (strain WH7803).